A 126-amino-acid polypeptide reads, in one-letter code: 13 kDa ribonucleoprotein-associated protein (126 aa).

This sequence belongs to the eukaryotic ribosomal protein eL8 family. In terms of assembly, component of the U3 snoRNP particle. Binds to the C'/D and B/C motifs in U3 snoRNA. Component of the 25S U4/U6.U5 tri-snRNP particle, a subcomplex of the spliceosome. Binds to the 5' stem-loop of U4 snRNA.

The protein resides in the nucleus. Its subcellular location is the nucleolus. Its function is as follows. Common component of the spliceosome and rRNA processing machinery. In association with the spliceosomal U4/U6.U5 tri-snRNP particle, required for splicing of pre-mRNA. In association with box C/D snoRNPs, required for processing of pre-ribosomal RNA (rRNA) and site-specific 2'-O-methylation of substrate RNAs. Essential for the accumulation and stability of U4 snRNA, U6 snRNA, and box C/D snoRNAs. In Kluyveromyces lactis (strain ATCC 8585 / CBS 2359 / DSM 70799 / NBRC 1267 / NRRL Y-1140 / WM37) (Yeast), this protein is 13 kDa ribonucleoprotein-associated protein (SNU13).